Consider the following 758-residue polypeptide: Polyribonucleotide nucleotidyltransferase (758 aa).

Positions 482 and 488 each coordinate Mg(2+). A KH domain is found at 549–608 (PRVLSFYIDKDKISAAIGTKGKNIRSVCERSNAKIEIGDDGKVSVFAISSTEAEAAKNMM). The region spanning 618–686 (GSIIDAKVVK…KGGCPKLSRR (69 aa)) is the S1 motif domain. A disordered region spans residues 707–758 (DGLNNRDNYYNNSFNKKPEDNYHSNRPTRPRSGFSNRSRPKFGNNDSSSGFY). Low complexity predominate over residues 711 to 721 (NRDNYYNNSFN).

Belongs to the polyribonucleotide nucleotidyltransferase family. Mg(2+) is required as a cofactor.

It is found in the cytoplasm. The enzyme catalyses RNA(n+1) + phosphate = RNA(n) + a ribonucleoside 5'-diphosphate. Functionally, involved in mRNA degradation. Catalyzes the phosphorolysis of single-stranded polyribonucleotides processively in the 3'- to 5'-direction. In Wolbachia pipientis subsp. Culex pipiens (strain wPip), this protein is Polyribonucleotide nucleotidyltransferase.